The chain runs to 478 residues: GDP-fucose protein O-fucosyltransferase 3 (478 aa).

Over 1–8 the chain is Cytoplasmic; that stretch reads MVWIQRRR. Residues 9-31 form a helical; Signal-anchor for type II membrane protein membrane-spanning segment; it reads LLASCLCITATVFLLVTLQVVVE. Over 32–478 the chain is Lumenal; it reads LGKFERKKFK…QEFWALVFKD (447 aa). 2 N-linked (GlcNAc...) asparagine glycosylation sites follow: N110 and N168. A disulfide bridge links C389 with C392.

Belongs to the glycosyltransferase 10 family.

Its subcellular location is the endoplasmic reticulum membrane. The enzyme catalyses L-threonyl-[protein] + GDP-beta-L-fucose = 3-O-(alpha-L-fucosyl)-L-threonyl-[protein] + GDP + H(+). It carries out the reaction L-seryl-[protein] + GDP-beta-L-fucose = 3-O-(alpha-L-fucosyl)-L-seryl-[protein] + GDP + H(+). The protein operates within protein modification; protein glycosylation. Its function is as follows. Protein O-fucosyltransferase that specifically catalyzes O-fucosylation of serine or threonine residues in EMI domains of target proteins, such as MMRN1, MMRN2 and EMID1. Attaches fucose through an O-glycosidic linkage. O-fucosylation of EMI domain-containing proteins may be required for facilitating protein folding and secretion. May also show alpha-(1,3)-fucosyltransferase activity toward the innermost N-acetyl glucosamine (GlcNAc) residue in biantennary N-glycan acceptors. However, this was tested with a library of synthetic substrates and this activity is unsure in vivo. May be involved in biosynthesis of Lewis X-carrying biantennary N-glycans that regulate neuron stem cell self-renewal during brain development. This Canis lupus familiaris (Dog) protein is GDP-fucose protein O-fucosyltransferase 3 (FUT10).